The following is a 254-amino-acid chain: D-aminoacyl-tRNA deacylase (254 aa).

The tract at residues 61–83 (KPTLTVHTPGNLTEDNSHGGNPE) is disordered. Residues 65–74 (TVHTPGNLTE) are compositionally biased toward polar residues.

Belongs to the DtdA deacylase family. Monomer. Zn(2+) is required as a cofactor.

The catalysed reaction is a D-aminoacyl-tRNA + H2O = a tRNA + a D-alpha-amino acid + H(+). It catalyses the reaction glycyl-tRNA(Ala) + H2O = tRNA(Ala) + glycine + H(+). D-aminoacyl-tRNA deacylase with broad substrate specificity. By recycling D-aminoacyl-tRNA to D-amino acids and free tRNA molecules, this enzyme counteracts the toxicity associated with the formation of D-aminoacyl-tRNA entities in vivo. This Methanococcus maripaludis (strain C7 / ATCC BAA-1331) protein is D-aminoacyl-tRNA deacylase.